The following is an 85-amino-acid chain: Toxin BmKaTx10 (85 aa).

Residues 1–19 (MNYLVMVSFALLLMTGVES) form the signal peptide. The LCN-type CS-alpha/beta domain maps to 21–83 (RDGYIALPHN…VPIRVPGRCH (63 aa)). Intrachain disulfides connect cysteine 31–cysteine 82, cysteine 35–cysteine 55, cysteine 41–cysteine 65, and cysteine 45–cysteine 67.

This sequence belongs to the long (4 C-C) scorpion toxin superfamily. Sodium channel inhibitor family. Alpha subfamily. As to expression, expressed by the venom gland.

The protein localises to the secreted. Alpha toxins bind voltage-independently at site-3 of sodium channels (Nav) and inhibit the inactivation of the activated channels, thereby blocking neuronal transmission. The protein is Toxin BmKaTx10 of Olivierus martensii (Manchurian scorpion).